A 179-amino-acid chain; its full sequence is Large ribosomal subunit protein uL6 (179 aa).

The protein belongs to the universal ribosomal protein uL6 family. As to quaternary structure, part of the 50S ribosomal subunit.

In terms of biological role, this protein binds to the 23S rRNA, and is important in its secondary structure. It is located near the subunit interface in the base of the L7/L12 stalk, and near the tRNA binding site of the peptidyltransferase center. The sequence is that of Large ribosomal subunit protein uL6 from Acaryochloris marina (strain MBIC 11017).